An 876-amino-acid chain; its full sequence is Monofunctional isopimaradiene synthase, chloroplastic (876 aa).

The N-terminal 64 residues, 1-64 (MAMPSYSSLS…YLRLGSRKII (64 aa)), are a transit peptide targeting the chloroplast. Positions 628, 632, 772, 776, and 780 each coordinate Mg(2+). The DDXXD motif motif lies at 628–632 (DDLYD).

The protein belongs to the terpene synthase family. Tpsd subfamily. Mg(2+) is required as a cofactor.

The protein resides in the plastid. The protein localises to the chloroplast. It catalyses the reaction (+)-copalyl diphosphate = isopimara-7,15-diene + diphosphate. The protein operates within terpene metabolism; oleoresin biosynthesis. Involved in defensive oleoresin formation in conifers in response to insect attack or other injury. Involved in diterpene (C20) olefins biosynthesis. Monofunctional enzyme lacking the DXDD motif in the class II active site relevant for the cyclization of geranylgeranyl diphosphate (GGPP). Requires (+)-copalyl diphosphate ((+)-CPP) as substrate, but no activity with GGPP or ent-CPP. Isopimaradiene is the major products of the enzyme followed by sandaracopimaradiene. The polypeptide is Monofunctional isopimaradiene synthase, chloroplastic (Pinus contorta (Shore pine)).